The sequence spans 251 residues: uncharacterized protein (251 aa).

Positions 5, 7, 101, 132, 163, and 209 each coordinate a divalent metal cation.

Belongs to the metallo-dependent hydrolases superfamily. TatD-type hydrolase family. A divalent metal cation is required as a cofactor.

This is an uncharacterized protein from Methanocaldococcus jannaschii (strain ATCC 43067 / DSM 2661 / JAL-1 / JCM 10045 / NBRC 100440) (Methanococcus jannaschii).